We begin with the raw amino-acid sequence, 235 residues long: Large ribosomal subunit protein uL3 (235 aa).

The segment at 150 to 189 (AGGPASHGSGHHRHAGSTGMRSTPGRGLPGGKKAGQMGNE) is disordered.

The protein belongs to the universal ribosomal protein uL3 family. In terms of assembly, part of the 50S ribosomal subunit. Forms a cluster with proteins L14 and L19.

One of the primary rRNA binding proteins, it binds directly near the 3'-end of the 23S rRNA, where it nucleates assembly of the 50S subunit. This Protochlamydia amoebophila (strain UWE25) protein is Large ribosomal subunit protein uL3.